Here is a 208-residue protein sequence, read N- to C-terminus: 3-demethoxyubiquinol 3-hydroxylase (208 aa).

Residues E57, E87, H90, E139, E171, and H174 each coordinate Fe cation.

The protein belongs to the COQ7 family. Fe cation serves as cofactor.

It localises to the cell membrane. The catalysed reaction is a 5-methoxy-2-methyl-3-(all-trans-polyprenyl)benzene-1,4-diol + AH2 + O2 = a 3-demethylubiquinol + A + H2O. It functions in the pathway cofactor biosynthesis; ubiquinone biosynthesis. Functionally, catalyzes the hydroxylation of 2-nonaprenyl-3-methyl-6-methoxy-1,4-benzoquinol during ubiquinone biosynthesis. The protein is 3-demethoxyubiquinol 3-hydroxylase of Burkholderia lata (strain ATCC 17760 / DSM 23089 / LMG 22485 / NCIMB 9086 / R18194 / 383).